Consider the following 179-residue polypeptide: UPF0316 protein BH0621 (179 aa).

3 consecutive transmembrane segments (helical) span residues 9 to 29, 41 to 61, and 67 to 87; these read ALTMILIILIINVVYVTLFTV, LAATVSMIEIIVYVLGLSLVL, and IENLIAYAVGYGIGVITGMKV.

It belongs to the UPF0316 family.

It localises to the cell membrane. This Halalkalibacterium halodurans (strain ATCC BAA-125 / DSM 18197 / FERM 7344 / JCM 9153 / C-125) (Bacillus halodurans) protein is UPF0316 protein BH0621.